The chain runs to 450 residues: tRNA modification GTPase MnmE (450 aa).

Positions 20, 78, and 117 each coordinate (6S)-5-formyl-5,6,7,8-tetrahydrofolate. A TrmE-type G domain is found at 211–372; that stretch reads GLRMVIVGKP…LEESIYRETQ (162 aa). Asn-221 contacts K(+). GTP-binding positions include 221–226, 240–246, 265–268, 326–329, and 353–355; these read NVGKST, TDIPGTT, DTAG, NKVD, and SAL. Ser-225 lines the Mg(2+) pocket. Residues Thr-240, Ile-242, and Thr-245 each coordinate K(+). Thr-246 provides a ligand contact to Mg(2+). A (6S)-5-formyl-5,6,7,8-tetrahydrofolate-binding site is contributed by Lys-450.

The protein belongs to the TRAFAC class TrmE-Era-EngA-EngB-Septin-like GTPase superfamily. TrmE GTPase family. Homodimer. Heterotetramer of two MnmE and two MnmG subunits. Requires K(+) as cofactor.

The protein resides in the cytoplasm. Its function is as follows. Exhibits a very high intrinsic GTPase hydrolysis rate. Involved in the addition of a carboxymethylaminomethyl (cmnm) group at the wobble position (U34) of certain tRNAs, forming tRNA-cmnm(5)s(2)U34. This chain is tRNA modification GTPase MnmE, found in Thermotoga maritima (strain ATCC 43589 / DSM 3109 / JCM 10099 / NBRC 100826 / MSB8).